A 417-amino-acid polypeptide reads, in one-letter code: D-glycerate 2-kinase (417 aa).

It belongs to the glycerate kinase type-1 family. Homodimer. The cofactor is Mg(2+).

It carries out the reaction (R)-glycerate + ATP = (2R)-2-phosphoglycerate + ADP + H(+). Functionally, involved in the degradation of serine via 3-hydroxypyruvate. Catalyzes the ATP-dependent phosphorylation of D-glycerate to 2-phosphoglycerate. The polypeptide is D-glycerate 2-kinase (Thermotoga maritima (strain ATCC 43589 / DSM 3109 / JCM 10099 / NBRC 100826 / MSB8)).